Here is a 435-residue protein sequence, read N- to C-terminus: MDYFENVPKVQYEGKNAKSKYAFRHYNPEEIIMGKPMKDHLRFSVAFWHTMTEDGSDPFGDGTYQRNWEGSTPMETAKNRVDAFFEILEKLGAEYFCFHDVDIAPQGDSLKEFLENIDVMTDYIKGKMDKTGVKLLWNTANMFTHPTFVNGAATTNNADVYSMAAAQVKKGLDVSKKLNGENYVFWGGREGYENLLNTDMNFELDNLARFYQMVIDYAQKIDYHPQFLIEPKPKEPTKHQYDYDAATAMAFIQKYNLEDSFKLNLEANHATLAGHTFEHELNVAKNYNALGSLDANQGDLLLGWDTDEFPTDIYTATLAMYEVLDFGGIAPGGLNFDAKVRRTSFAMDDLILAHIAGMDTYARGLRAAAKMKDDNFFEQIIANRYESFSSGIGKQIVENKEDLESLTNYALSLNGVENKSGHIEHLKSLLNDYLV.

Catalysis depends on residues H99 and D102. Mg(2+) is bound by residues E230, E266, H269, D294, D305, D307, and D337.

The protein belongs to the xylose isomerase family. In terms of assembly, homotetramer. Mg(2+) serves as cofactor.

It is found in the cytoplasm. The enzyme catalyses alpha-D-xylose = alpha-D-xylulofuranose. The sequence is that of Xylose isomerase (xylA) from Tetragenococcus halophilus (Pediococcus halophilus).